Reading from the N-terminus, the 206-residue chain is MAVVKVYDQDKKETGELTLAPEVFEVEVRPEILNLVVRAQRAAKRAGTHSVKTRSTISGGGAKPWRQKGTGRARSGSNRSPVWRGGAVVFGPQPRDYSFKVNKKVRKLALKMALSSRLAEENLMVVKGIELPEVKTKHMVKVAGALGLGKALVVTPEMDDKLVLSARNIPGITLMTPEQLSVFEILKHAQLVLLEGAVEPVQERLK.

Residues 44–80 (KRAGTHSVKTRSTISGGGAKPWRQKGTGRARSGSNRS) form a disordered region.

This sequence belongs to the universal ribosomal protein uL4 family. As to quaternary structure, part of the 50S ribosomal subunit.

Functionally, one of the primary rRNA binding proteins, this protein initially binds near the 5'-end of the 23S rRNA. It is important during the early stages of 50S assembly. It makes multiple contacts with different domains of the 23S rRNA in the assembled 50S subunit and ribosome. Its function is as follows. Forms part of the polypeptide exit tunnel. The sequence is that of Large ribosomal subunit protein uL4 from Oleidesulfovibrio alaskensis (strain ATCC BAA-1058 / DSM 17464 / G20) (Desulfovibrio alaskensis).